Here is a 553-residue protein sequence, read N- to C-terminus: Glutamate--tRNA ligase (553 aa).

The 'HIGH' region signature appears at 103–113 (PNPSGPLHIGH).

The protein belongs to the class-I aminoacyl-tRNA synthetase family. Glutamate--tRNA ligase type 2 subfamily.

The protein localises to the cytoplasm. It carries out the reaction tRNA(Glu) + L-glutamate + ATP = L-glutamyl-tRNA(Glu) + AMP + diphosphate. In terms of biological role, catalyzes the attachment of glutamate to tRNA(Glu) in a two-step reaction: glutamate is first activated by ATP to form Glu-AMP and then transferred to the acceptor end of tRNA(Glu). The polypeptide is Glutamate--tRNA ligase (Methanothermobacter thermautotrophicus (strain ATCC 29096 / DSM 1053 / JCM 10044 / NBRC 100330 / Delta H) (Methanobacterium thermoautotrophicum)).